Reading from the N-terminus, the 419-residue chain is Oxamate carbamoyltransferase subunit AllG (419 aa).

The protein belongs to the AllG family. In terms of assembly, the OXTCase is composed of 3 subunits, AllF, AllG and AllH. Mg(2+) serves as cofactor.

It carries out the reaction oxamate + carbamoyl phosphate = N-carbamoyl-2-oxoglycine + phosphate. Its pathway is nitrogen metabolism; (S)-allantoin degradation. In terms of biological role, component of a carbamoyltransferase involved in the anaerobic nitrogen utilization via the assimilation of allantoin. Catalyzes the conversion of oxalurate (N-carbamoyl-2-oxoglycine) to oxamate and carbamoyl phosphate. The sequence is that of Oxamate carbamoyltransferase subunit AllG from Escherichia coli (strain K12).